A 137-amino-acid chain; its full sequence is MKPGEIIVKKTEIEINKGTDDSETVITVKNIGDRPIQVGSHYHFFEANTGLKFDREKAYGKHLDIPAGAAVRFEPGDEKKVQLVEYNGRRRIYGFRGLVDGAIDEERVFRVENGHPNAGVKNDEGKQNANKESGDNR.

Residues 113–137 are disordered; the sequence is NGHPNAGVKNDEGKQNANKESGDNR.

This sequence belongs to the urease beta subunit family. As to quaternary structure, heterotrimer of UreA (gamma), UreB (beta) and UreC (alpha) subunits. Three heterotrimers associate to form the active enzyme.

It is found in the cytoplasm. The catalysed reaction is urea + 2 H2O + H(+) = hydrogencarbonate + 2 NH4(+). The protein operates within nitrogen metabolism; urea degradation; CO(2) and NH(3) from urea (urease route): step 1/1. In Staphylococcus carnosus (strain TM300), this protein is Urease subunit beta.